Here is a 132-residue protein sequence, read N- to C-terminus: Small ribosomal subunit protein uS8c (132 aa).

The protein belongs to the universal ribosomal protein uS8 family. In terms of assembly, part of the 30S ribosomal subunit.

The protein resides in the plastid. Its subcellular location is the chloroplast. Functionally, one of the primary rRNA binding proteins, it binds directly to 16S rRNA central domain where it helps coordinate assembly of the platform of the 30S subunit. The chain is Small ribosomal subunit protein uS8c (rps8) from Phaeodactylum tricornutum (strain CCAP 1055/1).